A 227-amino-acid polypeptide reads, in one-letter code: ATP-dependent dethiobiotin synthetase BioD (227 aa).

Residue 13 to 18 (DIGKTY) participates in ATP binding. Position 17 (Thr-17) interacts with Mg(2+). The active site involves Lys-38. Substrate is bound at residue Ser-42. ATP is bound by residues Asp-55, 116–119 (EGSG), and 179–180 (NN). Mg(2+) is bound by residues Asp-55 and Glu-116.

The protein belongs to the dethiobiotin synthetase family. Homodimer. Mg(2+) serves as cofactor.

It localises to the cytoplasm. It catalyses the reaction (7R,8S)-7,8-diammoniononanoate + CO2 + ATP = (4R,5S)-dethiobiotin + ADP + phosphate + 3 H(+). It participates in cofactor biosynthesis; biotin biosynthesis; biotin from 7,8-diaminononanoate: step 1/2. Functionally, catalyzes a mechanistically unusual reaction, the ATP-dependent insertion of CO2 between the N7 and N8 nitrogen atoms of 7,8-diaminopelargonic acid (DAPA, also called 7,8-diammoniononanoate) to form a ureido ring. This is ATP-dependent dethiobiotin synthetase BioD from Clostridium botulinum (strain Langeland / NCTC 10281 / Type F).